The chain runs to 20 residues: SVAVAGAIIKGAALTFNVLQ.

The segment at 3–12 is plays an important role in the hemolytic activity; that stretch reads AVAGAIIKGA. Residues 11 to 20 form an N-terminal region region; that stretch reads GAALTFNVLQ.

Belongs to the actinoporin family. Sea anemone subfamily. In terms of assembly, octamer or nonamer in membranes. Monomer in the soluble state.

It is found in the secreted. Its subcellular location is the nematocyst. It localises to the target cell membrane. In terms of biological role, pore-forming protein that forms cations-selective hydrophilic pores of around 1 nm and causes cardiac stimulation and cytolysis. Pore formation is a multi-step process that involves specific recognition of membrane sphingomyelin (but neither cholesterol nor phosphatidylcholine) using aromatic rich region and adjacent phosphocholine (POC) binding site, firm binding to the membrane (mainly driven by hydrophobic interactions) accompanied by the transfer of the N-terminal region to the lipid-water interface and finally pore formation after oligomerization of monomers. Cytolytic effects include red blood cells hemolysis, platelet aggregation and lysis, cytotoxic and cytostatic effects on fibroblasts. Lethality in mammals has been ascribed to severe vasospasm of coronary vessels, cardiac arrhythmia, and inotropic effects. The sequence is that of Equinatoxin-3 from Actinia equina (Beadlet anemone).